A 246-amino-acid polypeptide reads, in one-letter code: Octanoyltransferase (246 aa).

In terms of domain architecture, BPL/LPL catalytic spans 38 to 213; that stretch reads AQQSDEFWVL…FLAKRLGLTP (176 aa). Substrate is bound by residues 77 to 84, 144 to 146, and 157 to 159; these read RGGQVTYH, SLG, and GLA. Cys-175 serves as the catalytic Acyl-thioester intermediate. A disordered region spans residues 225 to 246; it reads RQENVTTGGDPGSALTQQPERL.

It belongs to the LipB family.

The protein resides in the cytoplasm. It carries out the reaction octanoyl-[ACP] + L-lysyl-[protein] = N(6)-octanoyl-L-lysyl-[protein] + holo-[ACP] + H(+). Its pathway is protein modification; protein lipoylation via endogenous pathway; protein N(6)-(lipoyl)lysine from octanoyl-[acyl-carrier-protein]: step 1/2. Functionally, catalyzes the transfer of endogenously produced octanoic acid from octanoyl-acyl-carrier-protein onto the lipoyl domains of lipoate-dependent enzymes. Lipoyl-ACP can also act as a substrate although octanoyl-ACP is likely to be the physiological substrate. This chain is Octanoyltransferase, found in Alcanivorax borkumensis (strain ATCC 700651 / DSM 11573 / NCIMB 13689 / SK2).